A 114-amino-acid polypeptide reads, in one-letter code: MNISIEIKERDTDHIDIFVAGEIDAYTAPKVKEALEVYQVKEGIVLRIDLTEVSYMDSTGLGVFVGAFKSLRQRQSELVLFGLSDRLFRLFEITGLSDIIEIKNVEGEMNGNNA.

The 111-residue stretch at 4 to 114 (SIEIKERDTD…VEGEMNGNNA (111 aa)) folds into the STAS domain. Ser58 is subject to Phosphoserine.

It belongs to the anti-sigma-factor antagonist family. Phosphorylated by RsbW on a serine residue.

In terms of biological role, positive regulator of sigma-B activity. Non-phosphorylated RsbV binds to RsbW, preventing its association with sigma-B. When phosphorylated, releases RsbW, which is then free to complex with and inactivate sigma-B. In Listeria innocua serovar 6a (strain ATCC BAA-680 / CLIP 11262), this protein is Anti-sigma-B factor antagonist (rsbV).